A 357-amino-acid polypeptide reads, in one-letter code: Probable butyrate kinase 1 (357 aa).

It belongs to the acetokinase family.

It is found in the cytoplasm. It catalyses the reaction butanoate + ATP = butanoyl phosphate + ADP. In Caldanaerobacter subterraneus subsp. tengcongensis (strain DSM 15242 / JCM 11007 / NBRC 100824 / MB4) (Thermoanaerobacter tengcongensis), this protein is Probable butyrate kinase 1.